A 237-amino-acid chain; its full sequence is Phosphoribosylaminoimidazole-succinocarboxamide synthase (237 aa).

Belongs to the SAICAR synthetase family.

It carries out the reaction 5-amino-1-(5-phospho-D-ribosyl)imidazole-4-carboxylate + L-aspartate + ATP = (2S)-2-[5-amino-1-(5-phospho-beta-D-ribosyl)imidazole-4-carboxamido]succinate + ADP + phosphate + 2 H(+). It participates in purine metabolism; IMP biosynthesis via de novo pathway; 5-amino-1-(5-phospho-D-ribosyl)imidazole-4-carboxamide from 5-amino-1-(5-phospho-D-ribosyl)imidazole-4-carboxylate: step 1/2. The sequence is that of Phosphoribosylaminoimidazole-succinocarboxamide synthase from Serratia proteamaculans (strain 568).